A 72-amino-acid chain; its full sequence is Keratin-associated protein 19-5 (72 aa).

Belongs to the KRTAP type 19 family. As to quaternary structure, interacts with hair keratins.

In terms of biological role, in the hair cortex, hair keratin intermediate filaments are embedded in an interfilamentous matrix, consisting of hair keratin-associated proteins (KRTAP), which are essential for the formation of a rigid and resistant hair shaft through their extensive disulfide bond cross-linking with abundant cysteine residues of hair keratins. The matrix proteins include the high-sulfur and high-glycine-tyrosine keratins. This is Keratin-associated protein 19-5 (KRTAP19-5) from Homo sapiens (Human).